The primary structure comprises 513 residues: Abl interactor 2 (513 aa).

Residue Ser40 is modified to Phosphoserine. Positions 45–107 constitute a t-SNARE coiled-coil homology domain; sequence RALEETKAYT…DIHKEKVARR (63 aa). The interval 167-431 is disordered; it reads KMGGLPRTTP…PPEDYEEEEA (265 aa). Positions 174-185 are enriched in pro residues; the sequence is TTPPTQKPPSPP. Residues Ser183 and Ser227 each carry the phosphoserine modification. The segment covering 217 to 241 has biased composition (polar residues); that stretch reads PTRNMAPSQQSPVRTASVNQRNRTY. Over residues 242 to 272 the composition is skewed to low complexity; sequence SSSGSSGGSHPSSRSSSRENSGSGSVGVPIA. A compositionally biased stretch (pro residues) spans 273–282; sequence VPTPSPPSVF. Positions 283-325 are enriched in low complexity; the sequence is PAPAGSAGTPPLPATSASAPAPLVPATVPSSTAPNAAAGGAPN. Phosphothreonine is present on Thr361. The residue at position 368 (Ser368) is a Phosphoserine. The segment covering 376–399 has biased composition (polar residues); it reads SITSQTSLQNQMNGGPFYSQNPVS. Over residues 400–409 the composition is skewed to pro residues; that stretch reads DTPPPPPPVE. Residues 451–510 enclose the SH3 domain; the sequence is SYLEKVVAIYDYTKDKEDELSFQEGAIIYVIKKNDDGWYEGVMNGVTGLFPGNYVESIMH.

The protein belongs to the ABI family. As to quaternary structure, component of the WAVE complex composed of ABI2, CYFIP1 or CYFIP2, BRK1, NCKAP1 and WASF1/WAVE1. Within the complex, a heterodimer containing NCKAP1 and CYFIP1 interacts with a heterotrimer formed by WAVE1, ABI2 and BRK1. CYFIP2 binds to activated RAC1 which causes the complex to dissociate, releasing activated WASF1. Interacts (via SH3 domain) with ABL1 and ABL2. (Microbial infection) Interacts with human cytomegalovirus UL135. Post-translationally, phosphorylated by ABL1. In terms of tissue distribution, widely expressed. Abundant in testes, ovary, thymus, and colon, with lower but detectable levels in prostate, peripheral blood leukocytes, and spleen.

It localises to the cytoplasm. The protein resides in the nucleus. Its subcellular location is the cell projection. It is found in the lamellipodium. The protein localises to the filopodium. It localises to the cytoskeleton. The protein resides in the cell junction. Its subcellular location is the adherens junction. Functionally, regulator of actin cytoskeleton dynamics underlying cell motility and adhesion. Functions as a component of the WAVE complex, which activates actin nucleating machinery Arp2/3 to drive lamellipodia formation. Acts as a regulator and substrate of nonreceptor tyrosine kinases ABL1 and ABL2 involved in processes linked to cell growth and differentiation. Positively regulates ABL1-mediated phosphorylation of ENAH, which is required for proper polymerization of nucleated actin filaments at the leading edge. Contributes to the regulation of actin assembly at the tips of neuron projections. In particular, controls dendritic spine morphogenesis and may promote dendritic spine specification toward large mushroom-type spines known as repositories of memory in the brain. In hippocampal neurons, may mediate actin-dependent BDNF-NTRK2 early endocytic trafficking that triggers dendrite outgrowth. Participates in ocular lens morphogenesis, likely by regulating lamellipodia-driven adherens junction formation at the epithelial cell-secondary lens fiber interface. Also required for nascent adherens junction assembly in epithelial cells. This is Abl interactor 2 from Homo sapiens (Human).